Here is a 118-residue protein sequence, read N- to C-terminus: Holo-[acyl-carrier-protein] synthase (118 aa).

Aspartate 8 and glutamate 57 together coordinate Mg(2+).

It belongs to the P-Pant transferase superfamily. AcpS family. Requires Mg(2+) as cofactor.

The protein resides in the cytoplasm. The catalysed reaction is apo-[ACP] + CoA = holo-[ACP] + adenosine 3',5'-bisphosphate + H(+). Transfers the 4'-phosphopantetheine moiety from coenzyme A to a Ser of acyl-carrier-protein. The protein is Holo-[acyl-carrier-protein] synthase of Acholeplasma laidlawii (strain PG-8A).